The chain runs to 229 residues: Ribonuclease HII (229 aa).

In terms of domain architecture, RNase H type-2 spans 42 to 229; the sequence is TRIAGVDEVG…KPVHKILYQE (188 aa). Positions 48, 49, and 139 each coordinate a divalent metal cation.

The protein belongs to the RNase HII family. Mn(2+) serves as cofactor. Mg(2+) is required as a cofactor.

The protein localises to the cytoplasm. It carries out the reaction Endonucleolytic cleavage to 5'-phosphomonoester.. Its function is as follows. Endonuclease that specifically degrades the RNA of RNA-DNA hybrids. This Ruegeria sp. (strain TM1040) (Silicibacter sp.) protein is Ribonuclease HII.